A 322-amino-acid polypeptide reads, in one-letter code: Acetylglutamate kinase (322 aa).

Substrate contacts are provided by residues 89–90 (GG), Arg111, and Asn217.

This sequence belongs to the acetylglutamate kinase family. ArgB subfamily.

Its subcellular location is the cytoplasm. It carries out the reaction N-acetyl-L-glutamate + ATP = N-acetyl-L-glutamyl 5-phosphate + ADP. It participates in amino-acid biosynthesis; L-arginine biosynthesis; N(2)-acetyl-L-ornithine from L-glutamate: step 2/4. In terms of biological role, catalyzes the ATP-dependent phosphorylation of N-acetyl-L-glutamate. This Ehrlichia ruminantium (strain Gardel) protein is Acetylglutamate kinase.